The primary structure comprises 609 residues: Sporulation-specific protein 21 (609 aa).

Disordered stretches follow at residues 1–50, 68–96, and 124–165; these read MDNI…LENS, PASKSSRSIGSMKSNQSLVSMKSSDDGNS, and KLDS…SIKG. Positions 10-31 are enriched in polar residues; the sequence is MEGTSTMTVTSRSSEDSSCISN. Over residues 32–43 the composition is skewed to basic and acidic residues; sequence HEQDTDTHKDGD. Positions 68-81 are enriched in low complexity; the sequence is PASKSSRSIGSMKS. 2 stretches are compositionally biased toward polar residues: residues 82-96 and 127-136; these read NQSLVSMKSSDDGNS and STGSQRSKNN. Residues 143–159 are compositionally biased toward low complexity; sequence SSTTSQTTCSSSSSSSS. 3 coiled-coil regions span residues 283-342, 357-393, and 424-483; these read RTKI…DNES, RETLDRVNREQQLIIDQNEFLKKSVNELQNEVNATNF, and ENLT…LLIE. The tract at residues 586 to 609 is disordered; that stretch reads DQKSNQNSSTPYKQSQRQVPHSIK. Residues 587 to 609 show a composition bias toward polar residues; sequence QKSNQNSSTPYKQSQRQVPHSIK.

This sequence belongs to the MPC70 family. As to quaternary structure, interacts directly with MPC54, NUD1 and SPC42. Interacts with ADY3. Interacts with ADY4. Probable component of a SPB complex composed of ADY3, SSP1, DON1, MPC54, SPO21/MPC70, NUD1 and CNM67.

Its subcellular location is the prospore membrane. The protein localises to the cytoplasm. It localises to the cytoskeleton. The protein resides in the spindle pole. Involved in the pathway that organizes the shaping and sizing of the prospore membrane (PSM) during sporulation. May provide a meiosis-specific scaffold for the assembly of other proteins on spindle pole bodies (SPBs), and may be a limiting component for SPB formation. The polypeptide is Sporulation-specific protein 21 (SPO21) (Saccharomyces cerevisiae (strain ATCC 204508 / S288c) (Baker's yeast)).